Here is a 519-residue protein sequence, read N- to C-terminus: ATP synthase subunit beta, mitochondrial (519 aa).

195–202 (GGAGVGKT) serves as a coordination point for ATP.

It belongs to the ATPase alpha/beta chains family. As to quaternary structure, F-type ATPases have 2 components, CF(1) - the catalytic core - and CF(0) - the membrane proton channel. CF(1) has five subunits: alpha(3), beta(3), gamma(1), delta(1), epsilon(1). CF(0) has three main subunits: a, b and c.

It is found in the mitochondrion. The protein resides in the mitochondrion inner membrane. It catalyses the reaction ATP + H2O + 4 H(+)(in) = ADP + phosphate + 5 H(+)(out). Mitochondrial membrane ATP synthase (F(1)F(0) ATP synthase or Complex V) produces ATP from ADP in the presence of a proton gradient across the membrane which is generated by electron transport complexes of the respiratory chain. F-type ATPases consist of two structural domains, F(1) - containing the extramembraneous catalytic core, and F(0) - containing the membrane proton channel, linked together by a central stalk and a peripheral stalk. During catalysis, ATP synthesis in the catalytic domain of F(1) is coupled via a rotary mechanism of the central stalk subunits to proton translocation. Subunits alpha and beta form the catalytic core in F(1). Rotation of the central stalk against the surrounding alpha(3)beta(3) subunits leads to hydrolysis of ATP in three separate catalytic sites on the beta subunits. The chain is ATP synthase subunit beta, mitochondrial (atp-2) from Neurospora crassa (strain ATCC 24698 / 74-OR23-1A / CBS 708.71 / DSM 1257 / FGSC 987).